Reading from the N-terminus, the 801-residue chain is MLVSYKWLKELVDVDVTTAELAEKMSTTGIEVEGVETPAEGLSKLVVGHIVSCEDVPDTHLHLCQVDTGDDELRQVVCGAPNVKTGINVIVAVPGARIADNYKIKKGKIRGMESLGMICSLQELGLSESIIPKEFSDGIQILPEGAIPGDSIFSYLDLDDEIIELSITPNRADALSMRGVAHEVAAIYGKKVHFEEKNLIEEAERAADKISVVIESDKVLSYSARIVKNVTVAPSPQWLQNKLMNAGIRPINNVVDVTNYVLLTYGQPMHAFDFDKFDGTTIVARNAENGEKLITLDGEERDLIADDLVIAVNDQPVALAGVMGGQSTEIGSSSKTVVLEAAVFNGTSIRKTSGRLNLRSESSSRFEKGINYDTVSEAMDFAAAMLQELAGGQVLSGQVTEGVLPTEPVEVSTTLGYVNTRLGTELTYTDIEEVFEKLGFAISGSEVKFTVLVPRRRWDIAIQADLVEEIARIYGYEKLPTTLPEAGATAGELTSMQRLRRRVRTVAEGAGLSEIITYALTTPEKAVQFSTQATNITELMWPMTVDRSALRQNVVSGMLDTIAYNVARKNSNLAVYEIGKVFEQTGNPKEDLPTEVETFTFALTGLVEEKDFQTKSKPVDFFYAKGIVEALFIKLKLDVTFVAQKGLASMHPGRTATILLDGKEIGFVGQVHPQTAKQYDIPETYVAEINLSTIESQMNQALIFEDITKYPSVSRDIALLLAESVSHHDIVSAIETSGVKRLTAIKLFDVYAGNNIAEGYKSMAYSLTFQNPNDNLTDEEVAKYMEKITKSLVEKVNAEIR.

A tRNA-binding domain is found at 39–153 (AEGLSKLVVG…EGAIPGDSIF (115 aa)). The B5 domain maps to 406 to 481 (TEPVEVSTTL…RIYGYEKLPT (76 aa)). Mg(2+) contacts are provided by D459, D465, E468, and E469. The region spanning 708-801 (TKYPSVSRDI…LVEKVNAEIR (94 aa)) is the FDX-ACB domain.

Belongs to the phenylalanyl-tRNA synthetase beta subunit family. Type 1 subfamily. As to quaternary structure, tetramer of two alpha and two beta subunits. Mg(2+) is required as a cofactor.

It is found in the cytoplasm. The catalysed reaction is tRNA(Phe) + L-phenylalanine + ATP = L-phenylalanyl-tRNA(Phe) + AMP + diphosphate + H(+). This is Phenylalanine--tRNA ligase beta subunit from Streptococcus agalactiae serotype V (strain ATCC BAA-611 / 2603 V/R).